A 348-amino-acid chain; its full sequence is Dihydroorotase (348 aa).

Zn(2+)-binding residues include histidine 14 and histidine 16. Substrate contacts are provided by residues 16 to 18 (HLR) and asparagine 42. The Zn(2+) site is built by lysine 100, histidine 137, and histidine 175. At lysine 100 the chain carries N6-carboxylysine. Histidine 137 serves as a coordination point for substrate. Residue leucine 220 coordinates substrate. A Zn(2+)-binding site is contributed by aspartate 248. Aspartate 248 is an active-site residue. Histidine 252 and alanine 264 together coordinate substrate.

It belongs to the metallo-dependent hydrolases superfamily. DHOase family. Class II DHOase subfamily. Homodimer. Zn(2+) serves as cofactor.

It catalyses the reaction (S)-dihydroorotate + H2O = N-carbamoyl-L-aspartate + H(+). It participates in pyrimidine metabolism; UMP biosynthesis via de novo pathway; (S)-dihydroorotate from bicarbonate: step 3/3. Functionally, catalyzes the reversible cyclization of carbamoyl aspartate to dihydroorotate. The chain is Dihydroorotase from Pseudomonas paraeruginosa (strain DSM 24068 / PA7) (Pseudomonas aeruginosa (strain PA7)).